Consider the following 516-residue polypeptide: L-amino-acid oxidase (516 aa).

An N-terminal signal peptide occupies residues 1-18 (MNVFFMFSLLFLAALGSC). Cysteine 28 and cysteine 191 are disulfide-bonded. Residues 61-62 (MS), 81-82 (EA), arginine 89, and 105-108 (GPMR) each bind FAD. Arginine 108 is a substrate binding site. Residue asparagine 190 is glycosylated (N-linked (GlcNAc...) asparagine). Residue histidine 241 participates in substrate binding. Valine 279 provides a ligand contact to FAD. A disulfide bond links cysteine 349 and cysteine 430. Asparagine 379 carries an N-linked (GlcNAc...) asparagine glycan. Tyrosine 390 provides a ligand contact to substrate. Residues glutamate 475, 481 to 486 (HGWIDS), and 482 to 487 (GWIDSS) contribute to the FAD site. Residues 481–482 (HG) and 482–483 (GW) contribute to the substrate site.

The protein belongs to the flavin monoamine oxidase family. FIG1 subfamily. As to quaternary structure, homodimer; non-covalently linked. Requires FAD as cofactor. N-glycosylated. As to expression, expressed by the venom gland.

It localises to the secreted. It catalyses the reaction an L-alpha-amino acid + O2 + H2O = a 2-oxocarboxylate + H2O2 + NH4(+). In terms of biological role, catalyzes an oxidative deamination of predominantly hydrophobic and aromatic L-amino acids, thus producing hydrogen peroxide that may contribute to the diverse toxic effects of this enzyme. Exhibits diverse biological activities, such as hemorrhage, hemolysis, edema, apoptosis of vascular endothelial cells or tumor cell lines, antibacterial and antiparasitic activities, as well as regulation of platelet aggregation. Effects of snake L-amino oxidases on platelets are controversial, since they either induce aggregation or inhibit agonist-induced aggregation. These different effects are probably due to different experimental conditions. Displays dose-dependent inhibition on HIV-1 infection and replication. The protein is L-amino-acid oxidase of Trimeresurus stejnegeri (Chinese green tree viper).